A 243-amino-acid chain; its full sequence is Glycerophosphodiester phosphodiesterase (243 aa).

Positions 3-239 (TLVIAHRGDS…DDPETLINLV (237 aa)) constitute a GP-PDE domain. His8 functions as the Proton acceptor in the catalytic mechanism. Ca(2+) contacts are provided by Glu35 and Asp37. His50 acts as the Proton donor in catalysis. Glu110 provides a ligand contact to Ca(2+).

This sequence belongs to the glycerophosphoryl diester phosphodiesterase family. Homodimer. The cofactor is Mg(2+). Ca(2+) is required as a cofactor.

The catalysed reaction is a sn-glycero-3-phosphodiester + H2O = an alcohol + sn-glycerol 3-phosphate + H(+). It carries out the reaction sn-glycerol 3-phosphocholine + H2O = sn-glycerol 3-phosphate + choline + H(+). Its activity is regulated as follows. Inhibited by EDTA. Its function is as follows. Glycerophosphodiester phosphodiesterase hydrolyzes glycerophosphodiesters into glycerol-3-phosphate (G3P) and the corresponding alcohol. Can use glycerophosphocholine. This chain is Glycerophosphodiester phosphodiesterase, found in Caldanaerobacter subterraneus subsp. tengcongensis (strain DSM 15242 / JCM 11007 / NBRC 100824 / MB4) (Thermoanaerobacter tengcongensis).